The chain runs to 64 residues: Ferredoxin-like protein in nif region (64 aa).

Residues 2 to 30 (AFKIIASQCTQCGACEFECPSGAISFKTD) enclose the 4Fe-4S ferredoxin-type domain. Residues Cys10, Cys13, Cys16, Cys20, Cys39, Cys42, Cys51, and Cys55 each contribute to the [4Fe-4S] cluster site.

It depends on [4Fe-4S] cluster as a cofactor.

In Rhizobium leguminosarum bv. trifolii, this protein is Ferredoxin-like protein in nif region (fdxN).